The following is a 321-amino-acid chain: Beta-1,3-N-acetylglucosaminyltransferase manic fringe (321 aa).

At 1 to 7 the chain is on the cytoplasmic side; it reads MQCRLPR. The helical; Signal-anchor for type II membrane protein transmembrane segment at 8-27 threads the bilayer; sequence GLAGALLTLLCMGLLCLRYH. Over 28 to 321 the chain is Lumenal; that stretch reads LNLSPQRVQG…TPWCPQLGAR (294 aa). Residue arginine 70 participates in substrate binding. N-linked (GlcNAc...) asparagine glycosylation occurs at asparagine 109. Disulfide bonds link cysteine 110–cysteine 121 and cysteine 139–cysteine 202. Aspartate 143 contributes to the substrate binding site. Mn(2+) is bound at residue aspartate 144. An N-linked (GlcNAc...) asparagine glycan is attached at asparagine 185. The active site involves aspartate 232. Histidine 256 contributes to the Mn(2+) binding site. Cysteine 306 and cysteine 315 are oxidised to a cystine.

The protein belongs to the glycosyltransferase 31 family. The cofactor is Mn(2+).

The protein resides in the golgi apparatus membrane. It catalyses the reaction 3-O-(alpha-L-fucosyl)-L-threonyl-[EGF-like domain protein] + UDP-N-acetyl-alpha-D-glucosamine = 3-O-(N-acetyl-beta-D-glucosaminyl-(1-&gt;3)-alpha-L-fucosyl)-L-threonyl-[EGF-like domain protein] + UDP + H(+). It carries out the reaction 3-O-(alpha-L-fucosyl)-L-seryl-[EGF-like domain protein] + UDP-N-acetyl-alpha-D-glucosamine = 3-O-(N-acetyl-beta-D-glucosaminyl-(1-&gt;3)-alpha-L-fucosyl)-L-seryl-[EGF-like domain protein] + UDP + H(+). Glycosyltransferase that initiates the elongation of O-linked fucose residues attached to EGF-like repeats in the extracellular domain of Notch molecules. Modulates NOTCH1 activity by modifying O-fucose residues at specific EGF-like domains resulting in inhibition of NOTCH1 activation by JAG1 and enhancement of NOTCH1 activation by DLL1 via an increase in its binding to DLL1. The sequence is that of Beta-1,3-N-acetylglucosaminyltransferase manic fringe from Homo sapiens (Human).